Consider the following 405-residue polypeptide: Solute carrier family 35 member E2A (405 aa).

A disordered region spans residues 1–22 (MSAAAKSQVPEEAAPGCEEEPK). The next 10 helical transmembrane spans lie at 76 to 96 (LIYL…NKYI), 106 to 126 (MLGA…IFVP), 142 to 162 (FIMT…LGLV), 167 to 187 (VAVS…VIMS), 195 to 215 (TGLL…LCTA), 219 to 241 (SFNI…QNVF), 264 to 284 (AAAV…PVIG), 296 to 316 (IVLL…TAYA), 326 to 346 (FSVA…IVFG), and 347 to 367 (NKIT…VLLY). The segment at 380–405 (SLVTATSRNPEDDTEPLVPQDSRQHH) is disordered.

Belongs to the TPT transporter family. SLC35E subfamily.

It is found in the membrane. Its function is as follows. Putative transporter. The sequence is that of Solute carrier family 35 member E2A (Slc35e2a) from Mus musculus (Mouse).